The following is a 396-amino-acid chain: Probable sugar efflux transporter (396 aa).

The next 12 membrane-spanning stretches (helical) occupy residues 15–35, 50–70, 81–101, 103–123, 136–156, 169–189, 209–229, 246–266, 275–295, 301–321, 333–353, and 364–384; these read VVTL…PVGL, VGIM…PFML, LICL…AWNF, VLVI…SITA, AQAL…GLPI, TFFA…KLLP, PALM…YTAY, FATV…LVFG, LLVS…LPAA, LALL…GMQV, VAMA…ALAG, and TIGY…VLIF.

This sequence belongs to the major facilitator superfamily. SotB (TC 2.A.1.2) family.

The protein resides in the cell inner membrane. Functionally, involved in the efflux of sugars. The physiological role may be the reduction of the intracellular concentration of toxic sugars or sugar metabolites. The protein is Probable sugar efflux transporter of Salmonella arizonae (strain ATCC BAA-731 / CDC346-86 / RSK2980).